The sequence spans 192 residues: uncharacterized protein (192 aa).

Residues 29 to 160 form the Nudix hydrolase domain; it reads RRQAAVLIPL…PLDIQRRGHD (132 aa). The Nudix box signature appears at 67-89; that stretch reads GAVDSTDASLIAAALREAHEEVA. Mg(2+) is bound by residues glutamate 83 and glutamate 87.

The protein belongs to the Nudix hydrolase family. PCD1 subfamily. It depends on Mn(2+) as a cofactor. Requires Mg(2+) as cofactor.

In terms of biological role, probably mediates the hydrolysis of some nucleoside diphosphate derivatives. This is an uncharacterized protein from Enterobacter sp. (strain 638).